We begin with the raw amino-acid sequence, 175 residues long: tRNA-acetylating toxin 3 (175 aa).

10 residues coordinate acetyl-CoA: L95, V97, G103, G105, G107, A108, D133, Q138, D141, and W142. The active site involves Y143. Residues G145 and F146 each contribute to the acetyl-CoA site.

The protein belongs to the acetyltransferase family. GNAT subfamily. Homodimer (in absence of antitoxin); has a condensed and elongated form. Forms a complex with cognate antitoxin TacA3. Forms a 4:2 antitoxin:toxin complex with cognate antitoxin TacA3. Forms a 4:4 antitoxin:toxin complex with promoter DNA, where 2 TacT3 dimers bridge 2 TacA3 dimers. Only TacA3 contacts promoter DNA in the octomeric form. TacT3 may contact DNA in the hexameric form.

It carries out the reaction glycyl-tRNA(Gly) + acetyl-CoA = N-acetylglycyl-tRNA(Gly) + CoA + H(+). Toxic component of a type II toxin-antitoxin (TA) system. Acetylates tRNA and inhibits translation. Acetylates only Gly-tRNA on all 3 Gly-tRNA(Gly) isoacceptors in situ. In vitro acetylates mainly Ile/Leu and Gly. Overexpression during the lag phase of a tacA3-tacT3 deletion strain leads to a 150-fold increase in persister cells in the presence of cefotaxime and a non-growth state in the absence of antibiotic. Persister cell formation and the growth defect are neutralized by cognate antitoxin TacA3, but not by TacA1 or TacA2. Plays a role in persister cell formation. Its function is as follows. The TacA3-TacT3 complex both represses and derepresses expression of its own operon. The hexameric 4:2 TacA3-TacT3 complex binds promoter DNA and represses its transcription; both subunits are required. The octomeric 4:4 TacA3-TacT3 complex derepresses the operon. The shift from hexameric to octomeric complex probably alters DNA-binding, leading to dissociation from the operator DNA and derepression. This chain is tRNA-acetylating toxin 3, found in Salmonella typhimurium (strain 14028s / SGSC 2262).